The primary structure comprises 367 residues: MKVKVLSLLVPALLVAGAANAAEVYNKDGNKLDLYGKVDGLHYFSDNKDVDGDQTYMRLGFKGETQVTDQLTGYGQWEYQIQGNSAENENNSWTRVAFAGLKFQDVGSFDYGRNYGVVYDVTSWTDVLPEFGGDTYGSDNFMQQRGNGFATYRNTDFFGLVDGLNFAVQYQGKNGNPSGEGFTSGVTNNGRDALRQNGDGVGGSITYDYEGFGIGGAISSSKRTDAQNTAAYIGNGDRAETYTGGLKYDANNIYLAAQYTQTYNATRVGSLGWANKAQNFEAVAQYQFDFGLRPSLAYLQSKGKNLGRGYDDEDILKYVDVGATYYFNKNMSTYVDYKINLLDDNQFTRDAGINTDNIVALGLVYQF.

The signal sequence occupies residues 1-21; sequence MKVKVLSLLVPALLVAGAANA. At 22–33 the chain is on the periplasmic side; the sequence is AEVYNKDGNKLD. Residues 34-42 form a beta stranded membrane-spanning segment; the sequence is LYGKVDGLH. The Extracellular segment spans residues 43–53; that stretch reads YFSDNKDVDGD. A beta stranded transmembrane segment spans residues 54–63; the sequence is QTYMRLGFKG. The Periplasmic portion of the chain corresponds to 64-73; the sequence is ETQVTDQLTG. Residues 74–84 form a beta stranded membrane-spanning segment; that stretch reads YGQWEYQIQGN. At 85–91 the chain is on the extracellular side; the sequence is SAENENN. The chain crosses the membrane as a beta stranded span at residues 92 to 101; that stretch reads SWTRVAFAGL. Over 102–106 the chain is Periplasmic; that stretch reads KFQDV. The beta stranded transmembrane segment at 107-115 threads the bilayer; that stretch reads GSFDYGRNY. The loop L3; may constrict the pore stretch occupies residues 116 to 133; the sequence is GVVYDVTSWTDVLPEFGG. Topologically, residues 116-141 are extracellular; sequence GVVYDVTSWTDVLPEFGGDTYGSDNF. Residues 142-154 traverse the membrane as a beta stranded segment; the sequence is MQQRGNGFATYRN. The Periplasmic segment spans residues 155-163; the sequence is TDFFGLVDG. Residues 164 to 171 form a beta stranded membrane-spanning segment; sequence LNFAVQYQ. Over 172-200 the chain is Extracellular; it reads GKNGNPSGEGFTSGVTNNGRDALRQNGDG. A beta stranded membrane pass occupies residues 201 to 207; that stretch reads VGGSITY. Residues 208-211 are Periplasmic-facing; it reads DYEG. Residues 212–219 form a beta stranded membrane-spanning segment; the sequence is FGIGGAIS. Residues 220-241 lie on the Extracellular side of the membrane; it reads SSKRTDAQNTAAYIGNGDRAET. A beta stranded membrane pass occupies residues 242–248; the sequence is YTGGLKY. The Periplasmic portion of the chain corresponds to 249 to 252; it reads DANN. A beta stranded membrane pass occupies residues 253 to 260; that stretch reads IYLAAQYT. Residues 261–269 are Extracellular-facing; it reads QTYNATRVG. The beta stranded transmembrane segment at 270 to 286 threads the bilayer; sequence SLGWANKAQNFEAVAQY. Over 287–291 the chain is Periplasmic; the sequence is QFDFG. The beta stranded transmembrane segment at 292 to 299 threads the bilayer; sequence LRPSLAYL. The Extracellular portion of the chain corresponds to 300–318; it reads QSKGKNLGRGYDDEDILKY. The beta stranded transmembrane segment at 319–326 threads the bilayer; the sequence is VDVGATYY. Topologically, residues 327–330 are periplasmic; it reads FNKN. A beta stranded membrane pass occupies residues 331-338; the sequence is MSTYVDYK. The Extracellular portion of the chain corresponds to 339–358; it reads INLLDDNQFTRDAGINTDNI. Mg(2+) is bound by residues asparagine 340, leucine 342, and threonine 355. A beta stranded transmembrane segment spans residues 359 to 366; that stretch reads VALGLVYQ. Residue phenylalanine 367 is a topological domain, periplasmic.

Belongs to the Gram-negative porin family. In terms of assembly, homotrimer. Forms mixed heterotrimers with OmpF and with PhoE; other mixed heterotrimers are also probable.

The protein resides in the cell outer membrane. In terms of biological role, forms pores that allow passive diffusion of small molecules across the outer membrane. Functionally, (Microbial infection) Supports colicin E5 entry in the absence of its major receptor OmpF. Its function is as follows. (Microbial infection) A mixed OmpC-OmpF heterotrimer is the outer membrane receptor for toxin CdiA-EC536; polymorphisms in extracellular loops 4 and 5 of OmpC confer susceptibility to CdiA-EC536-mediated toxicity. In Escherichia coli (strain K12), this protein is Outer membrane porin C (ompC).